The sequence spans 109 residues: uncharacterized protein (109 aa).

The next 3 helical transmembrane spans lie at 7 to 27, 37 to 57, and 63 to 83; these read IITI…PFFV, YIRY…VVYC, and ILTG…LGLH.

This sequence belongs to the AzlD/HI_1737/HP1330 family.

It is found in the cell membrane. This is an uncharacterized protein from Haemophilus influenzae (strain ATCC 51907 / DSM 11121 / KW20 / Rd).